The following is a 286-amino-acid chain: 2-hydroxy-6-oxo-6-phenylhexa-2,4-dienoate hydrolase (286 aa).

Substrate contacts are provided by residues 42 to 43 (GG), Asn-51, Asn-111, Ser-180, and Arg-190. His-265 (proton acceptor) is an active-site residue. Position 266 (Trp-266) interacts with substrate.

This sequence belongs to the AB hydrolase superfamily. BphD family. In terms of assembly, homodimer.

It catalyses the reaction 2,6-dioxo-6-phenylhexa-3-enoate + H2O = 2-oxopent-4-enoate + benzoate + H(+). The protein operates within xenobiotic degradation; biphenyl degradation; 2-hydroxy-2,4-pentadienoate and benzoate from biphenyl: step 4/4. Functionally, catalyzes an unusual C-C bond hydrolysis of 2-hydroxy-6-oxo-6-phenylhexa-2,4-dienoic acid (HOPDA) to produce benzoic acid and 2-hydroxy-2,4-pentadienoic acid (HPD). The protein is 2-hydroxy-6-oxo-6-phenylhexa-2,4-dienoate hydrolase of Polaromonas naphthalenivorans (strain CJ2).